We begin with the raw amino-acid sequence, 98 residues long: Protein translation factor SUI1 homolog (98 aa).

This sequence belongs to the SUI1 family.

This Thermococcus gammatolerans (strain DSM 15229 / JCM 11827 / EJ3) protein is Protein translation factor SUI1 homolog.